A 295-amino-acid polypeptide reads, in one-letter code: Putative aquaporin-12A (295 aa).

Residues Met1–Ala21 form a helical membrane-spanning segment. Over Arg22–Asp54 the chain is Extracellular. The chain crosses the membrane as a helical span at residues Phe55–Leu75. Over Asp76–Thr99 the chain is Cytoplasmic. The segment at residues Gly77–Cys114 is an intramembrane region (discontinuously helical). Positions Asn81 to Thr83 match the NPA 1 motif. Residues Leu100–Ser126 traverse the membrane as a helical segment. At Asp127–Thr145 the chain is on the extracellular side. Residues Ser146–Leu166 form a helical membrane-spanning segment. Over His167–Pro178 the chain is Cytoplasmic. A helical transmembrane segment spans residues Ala179–Phe199. The discontinuously helical intramembrane region spans Thr195 to Ser206. Residues Asn200–Ala202 carry the NPA 2 motif. Residues Asn200–Thr215 are Extracellular-facing. A helical membrane pass occupies residues Leu216–Leu236. Residues Leu237 to Ser295 are Cytoplasmic-facing. The disordered stretch occupies residues Lys257–Ser295.

This sequence belongs to the MIP/aquaporin (TC 1.A.8) family. AQP11/AQP12 subfamily. In terms of assembly, homotetramer; each monomer provides an independent water pore. As to expression, restricted to the pancreas.

Its subcellular location is the membrane. The enzyme catalyses H2O(in) = H2O(out). In terms of biological role, putative aquaporin. Could form homotetrameric transmembrane channels, with each monomer independently mediating water transport across the plasma membrane along its osmotic gradient. The polypeptide is Putative aquaporin-12A (Homo sapiens (Human)).